Here is a 220-residue protein sequence, read N- to C-terminus: Uracil-DNA glycosylase 1 (220 aa).

The active-site Proton acceptor is Asp-65.

The protein belongs to the uracil-DNA glycosylase (UDG) superfamily. UNG family.

Its subcellular location is the cytoplasm. It catalyses the reaction Hydrolyzes single-stranded DNA or mismatched double-stranded DNA and polynucleotides, releasing free uracil.. Functionally, excises uracil residues from the DNA which can arise as a result of misincorporation of dUMP residues by DNA polymerase or due to deamination of cytosine. The protein is Uracil-DNA glycosylase 1 of Bacteroides fragilis (strain ATCC 25285 / DSM 2151 / CCUG 4856 / JCM 11019 / LMG 10263 / NCTC 9343 / Onslow / VPI 2553 / EN-2).